Here is a 751-residue protein sequence, read N- to C-terminus: Glutathione biosynthesis bifunctional protein GshAB (751 aa).

The tract at residues 1-336 is glutamate--cysteine ligase; the sequence is MELDAVGKAI…QADQLTRQVL (336 aa).

This sequence in the N-terminal section; belongs to the glutamate--cysteine ligase type 1 family. Type 2 subfamily. In terms of assembly, monomer.

The catalysed reaction is L-cysteine + L-glutamate + ATP = gamma-L-glutamyl-L-cysteine + ADP + phosphate + H(+). It carries out the reaction gamma-L-glutamyl-L-cysteine + glycine + ATP = glutathione + ADP + phosphate + H(+). It functions in the pathway sulfur metabolism; glutathione biosynthesis; glutathione from L-cysteine and L-glutamate: step 1/2. The protein operates within sulfur metabolism; glutathione biosynthesis; glutathione from L-cysteine and L-glutamate: step 2/2. Its function is as follows. Synthesizes glutathione from L-glutamate and L-cysteine via gamma-L-glutamyl-L-cysteine. This chain is Glutathione biosynthesis bifunctional protein GshAB (gshAB), found in Lactiplantibacillus plantarum (strain ATCC BAA-793 / NCIMB 8826 / WCFS1) (Lactobacillus plantarum).